A 351-amino-acid chain; its full sequence is Regulator of V-ATPase in vacuolar membrane protein 2 (351 aa).

As to quaternary structure, component of the RAVE complex composed of RAV1, RAV2 and CBF3D/SKP1. Within the complex, it interacts directly with RAV1 and CBF3D. Interacts with the V-ATPase V1 subunits VMA1, VMA2 and VMA8.

The protein localises to the cytoplasm. It is found in the early endosome membrane. Its function is as follows. Component of the RAVE complex, which is required for stable assembly of the vacuolar ATPase complex V-ATPase under many conditions. May be required for transport between the early endosome and the late endosome/prevacuolar compartment (PVC). This is Regulator of V-ATPase in vacuolar membrane protein 2 (RAV2) from Saccharomyces cerevisiae (strain ATCC 204508 / S288c) (Baker's yeast).